The chain runs to 400 residues: NADH-quinone oxidoreductase subunit D (400 aa).

This sequence belongs to the complex I 49 kDa subunit family. NDH-1 is composed of 14 different subunits. Subunits NuoB, C, D, E, F, and G constitute the peripheral sector of the complex.

It localises to the cell inner membrane. It carries out the reaction a quinone + NADH + 5 H(+)(in) = a quinol + NAD(+) + 4 H(+)(out). Its function is as follows. NDH-1 shuttles electrons from NADH, via FMN and iron-sulfur (Fe-S) centers, to quinones in the respiratory chain. The immediate electron acceptor for the enzyme in this species is believed to be menaquinone. Couples the redox reaction to proton translocation (for every two electrons transferred, four hydrogen ions are translocated across the cytoplasmic membrane), and thus conserves the redox energy in a proton gradient. The chain is NADH-quinone oxidoreductase subunit D from Prosthecochloris aestuarii (strain DSM 271 / SK 413).